Consider the following 338-residue polypeptide: Glycerol-3-phosphate dehydrogenase [NAD(P)+] (338 aa).

Positions 12, 33, and 110 each coordinate NADPH. The sn-glycerol 3-phosphate site is built by K110, G142, and S144. Residue A146 participates in NADPH binding. 5 residues coordinate sn-glycerol 3-phosphate: K197, D250, S260, R261, and N262. K197 acts as the Proton acceptor in catalysis. R261 is an NADPH binding site. V286 and E288 together coordinate NADPH.

Belongs to the NAD-dependent glycerol-3-phosphate dehydrogenase family.

The protein resides in the cytoplasm. It carries out the reaction sn-glycerol 3-phosphate + NAD(+) = dihydroxyacetone phosphate + NADH + H(+). It catalyses the reaction sn-glycerol 3-phosphate + NADP(+) = dihydroxyacetone phosphate + NADPH + H(+). It participates in membrane lipid metabolism; glycerophospholipid metabolism. Its function is as follows. Catalyzes the reduction of the glycolytic intermediate dihydroxyacetone phosphate (DHAP) to sn-glycerol 3-phosphate (G3P), the key precursor for phospholipid synthesis. This chain is Glycerol-3-phosphate dehydrogenase [NAD(P)+], found in Acidobacterium capsulatum (strain ATCC 51196 / DSM 11244 / BCRC 80197 / JCM 7670 / NBRC 15755 / NCIMB 13165 / 161).